A 153-amino-acid polypeptide reads, in one-letter code: uncharacterized protein (153 aa).

The signal sequence occupies residues 1 to 22; sequence MKAFNKLFSLVVASVLVFSLAG. C23 is lipidated: N-palmitoyl cysteine. The S-diacylglycerol cysteine moiety is linked to residue C23.

This sequence to L.monocytogenes lmo0207.

The protein resides in the cell membrane. This is an uncharacterized protein from Escherichia coli (strain K12).